We begin with the raw amino-acid sequence, 555 residues long: CTP synthase (555 aa).

The segment at 1 to 270 (MTKFVFVTGG…DGLICDKLRL (270 aa)) is amidoligase domain. Ser-13 contributes to the CTP binding site. Residue Ser-13 coordinates UTP. ATP contacts are provided by residues 14 to 19 (SLGKGI) and Asp-71. Residues Asp-71 and Glu-144 each coordinate Mg(2+). Residues 151-153 (DIE), 191-196 (KTKPTQ), and Lys-227 each bind CTP. Residues 191 to 196 (KTKPTQ) and Lys-227 contribute to the UTP site. Residues 295 to 547 (NIVMVGKYVE…IKAALDHQAA (253 aa)) form the Glutamine amidotransferase type-1 domain. Residue Gly-356 participates in L-glutamine binding. The active-site Nucleophile; for glutamine hydrolysis is the Cys-383. L-glutamine is bound by residues 384–387 (LGMQ), Glu-407, and Arg-473. Catalysis depends on residues His-520 and Glu-522.

Belongs to the CTP synthase family. Homotetramer.

It carries out the reaction UTP + L-glutamine + ATP + H2O = CTP + L-glutamate + ADP + phosphate + 2 H(+). It catalyses the reaction L-glutamine + H2O = L-glutamate + NH4(+). The enzyme catalyses UTP + NH4(+) + ATP = CTP + ADP + phosphate + 2 H(+). The protein operates within pyrimidine metabolism; CTP biosynthesis via de novo pathway; CTP from UDP: step 2/2. Allosterically activated by GTP, when glutamine is the substrate; GTP has no effect on the reaction when ammonia is the substrate. The allosteric effector GTP functions by stabilizing the protein conformation that binds the tetrahedral intermediate(s) formed during glutamine hydrolysis. Inhibited by the product CTP, via allosteric rather than competitive inhibition. Functionally, catalyzes the ATP-dependent amination of UTP to CTP with either L-glutamine or ammonia as the source of nitrogen. Regulates intracellular CTP levels through interactions with the four ribonucleotide triphosphates. In Albidiferax ferrireducens (strain ATCC BAA-621 / DSM 15236 / T118) (Rhodoferax ferrireducens), this protein is CTP synthase.